A 239-amino-acid polypeptide reads, in one-letter code: Purine nucleoside phosphorylase DeoD-type (239 aa).

His-5 contacts a purine D-ribonucleoside. The phosphate site is built by Gly-21 and Arg-25. An N6-acetyllysine modification is found at Lys-27. Phosphate-binding positions include Arg-44 and 88-91; that span reads RVGS. A purine D-ribonucleoside contacts are provided by residues 180 to 182 and 204 to 205; these read EME and SD. Residue Asp-205 is the Proton donor of the active site.

It belongs to the PNP/UDP phosphorylase family. Homohexamer; trimer of homodimers.

The enzyme catalyses a purine D-ribonucleoside + phosphate = a purine nucleobase + alpha-D-ribose 1-phosphate. It catalyses the reaction a purine 2'-deoxy-D-ribonucleoside + phosphate = a purine nucleobase + 2-deoxy-alpha-D-ribose 1-phosphate. Catalyzes the reversible phosphorolytic breakdown of the N-glycosidic bond in the beta-(deoxy)ribonucleoside molecules, with the formation of the corresponding free purine bases and pentose-1-phosphate. This is Purine nucleoside phosphorylase DeoD-type from Escherichia coli O81 (strain ED1a).